A 213-amino-acid polypeptide reads, in one-letter code: Reticulon-3 (213 aa).

Over residues 1–16 (MADTSGPQSSHISSSA) the composition is skewed to polar residues. Positions 1-20 (MADTSGPQSSHISSSAGEKG) are disordered. In terms of domain architecture, Reticulon spans 25-213 (VQDLLYWRDV…LPGALKKKSE (189 aa)). The next 2 helical transmembrane spans lie at 45–65 (MVLL…YLVL) and 154–174 (VFNG…APIV).

Homodimer.

The protein localises to the endoplasmic reticulum membrane. It localises to the golgi apparatus membrane. May be involved in membrane trafficking in the early secretory pathway. This is Reticulon-3 (rtn3) from Xenopus tropicalis (Western clawed frog).